Here is a 438-residue protein sequence, read N- to C-terminus: MSSNPAATLSDVQPDGFFTRGLADADPAVFGGLTEEIAREKKQIELIASENIVSKAVLEAQGSVFTNKYAEGYPGKRYYQGCHPSDVVEQLAIDRAKQLFNCGFANVQPHSGAQANGAVMLALTQPGDTIMGLSLDAGGHLTHGAKAALSGKWYKAVQYGVRPDDHRIDFDQVEALAREHKPKLIITGGSAYPRHIDFARFRAIADEVGALFMVDMAHFAGLVAGGVHPTPFGHAHVVTTTTHKTLRGPRGGMIMTDDEAIAKKINSAVFPGLQGGPLMHVVAAKAVAFGEALRPEFKAYAAAVVENAKVLAARLKERGADLVSGGTDTHLALVDLRPIGVTGRDADEALERAGITCNKNGVPNDPLPPVKTSGIRVGSPAGTTRGFGPAEFREIADMIADVLDGLAKNGPEGNGQTEAHVKARVEALCDRFPIYPEL.

(6S)-5,6,7,8-tetrahydrofolate contacts are provided by residues L135 and 139–141 (GHL). K244 is subject to N6-(pyridoxal phosphate)lysine. Positions 361–383 (GVPNDPLPPVKTSGIRVGSPAGT) are disordered.

The protein belongs to the SHMT family. As to quaternary structure, homodimer. The cofactor is pyridoxal 5'-phosphate.

The protein resides in the cytoplasm. It catalyses the reaction (6R)-5,10-methylene-5,6,7,8-tetrahydrofolate + glycine + H2O = (6S)-5,6,7,8-tetrahydrofolate + L-serine. Its pathway is one-carbon metabolism; tetrahydrofolate interconversion. It participates in amino-acid biosynthesis; glycine biosynthesis; glycine from L-serine: step 1/1. Its function is as follows. Catalyzes the reversible interconversion of serine and glycine with tetrahydrofolate (THF) serving as the one-carbon carrier. This reaction serves as the major source of one-carbon groups required for the biosynthesis of purines, thymidylate, methionine, and other important biomolecules. Also exhibits THF-independent aldolase activity toward beta-hydroxyamino acids, producing glycine and aldehydes, via a retro-aldol mechanism. This Rhizorhabdus wittichii (strain DSM 6014 / CCUG 31198 / JCM 15750 / NBRC 105917 / EY 4224 / RW1) (Sphingomonas wittichii) protein is Serine hydroxymethyltransferase.